Reading from the N-terminus, the 193-residue chain is Endoribonuclease YbeY (193 aa).

Zn(2+) is bound by residues His-109, His-113, and His-119. Positions 143 to 193 (GAALREGRREGRAGEAKDRWTRSPTSISTPSRSGSTARGSRAKTSRAGSRT) are disordered. Over residues 147 to 163 (REGRREGRAGEAKDRWT) the composition is skewed to basic and acidic residues. Positions 164 to 181 (RSPTSISTPSRSGSTARG) are enriched in low complexity.

Belongs to the endoribonuclease YbeY family. The cofactor is Zn(2+).

Its subcellular location is the cytoplasm. Functionally, single strand-specific metallo-endoribonuclease involved in late-stage 70S ribosome quality control and in maturation of the 3' terminus of the 16S rRNA. This chain is Endoribonuclease YbeY, found in Anaeromyxobacter dehalogenans (strain 2CP-C).